A 134-amino-acid polypeptide reads, in one-letter code: Large ribosomal subunit protein bL20 (134 aa).

Belongs to the bacterial ribosomal protein bL20 family.

Functionally, binds directly to 23S ribosomal RNA and is necessary for the in vitro assembly process of the 50S ribosomal subunit. It is not involved in the protein synthesizing functions of that subunit. This is Large ribosomal subunit protein bL20 from Rhizobium etli (strain CIAT 652).